The sequence spans 952 residues: Calsyntenin-1 (952 aa).

Residues 1–28 form the signal peptide; the sequence is MLRRPAPALARAVRLLLAGLLYGGGVWA. Residues 29 to 830 lie on the Extracellular side of the membrane; that stretch reads ARVNKHKPWL…PHPFAVVPST (802 aa). Cadherin domains follow at residues 38 to 154 and 155 to 255; these read LEPT…APVF and KEKS…SPGW. Residue N356 is glycosylated (N-linked (GlcNAc...) asparagine). The chain crosses the membrane as a helical span at residues 831–851; that stretch reads ATVVIVVCVSFLVFMIILGVF. Residues 852 to 952 lie on the Cytoplasmic side of the membrane; it reads RIRAAHQRTM…LEWDYSTLSY (101 aa). Residues 886 to 952 are disordered; it reads METYEDQHSS…LEWDYSTLSY (67 aa). The segment covering 896–930 has biased composition (acidic residues); that stretch reads EEEEEEEEEEESEDGEEEEDITSAESESSEEEEGG. The segment covering 934–952 has biased composition (polar residues); that stretch reads GQNTTRQQQLEWDYSTLSY.

This sequence belongs to the calsyntenin family. As to quaternary structure, directly interacts with APBA2. Forms a tripartite complex with APBA2 and APP. Interacts with KLC1. Interacts with APBB1; this interaction stabilizes AlcICD metabolism. In terms of assembly, interacts with PSEN1. Proteolytically processed under normal cellular conditions. A primary zeta-cleavage generates a large extracellular (soluble) N-terminal domain (sAlc) and a short C-terminal transmembrane fragment (CTF1). A secondary cleavage catalyzed by presenilin gamma-secretase within the transmembrane domain releases the beta-Alc-alpha chain in the extracellular milieu and produces an intracellular fragment (AlcICD). This processing is strongly suppressed in the tripartite complex formed with APBA2 and APP, which seems to prevent the association with PSEN1. In terms of tissue distribution, preferentially expressed in the retina and brain.

The protein resides in the postsynaptic cell membrane. It is found in the endoplasmic reticulum membrane. The protein localises to the golgi apparatus membrane. It localises to the cell projection. Its subcellular location is the neuron projection. The protein resides in the nucleus. Functionally, postsynaptic adhesion molecule that binds to presynaptic neurexins to mediate both excitatory and inhibitory synapse formation. Promotes synapse development by acting as a cell adhesion molecule at the postsynaptic membrane, which associates with neurexin-alpha at the presynaptic membrane. Also functions as a cargo in axonal anterograde transport by acting as a molecular adapter that promotes KLC1 association with vesicles. Complex formation with APBA2 and APP, stabilizes APP metabolism and enhances APBA2-mediated suppression of beta-APP40 secretion, due to the retardation of intracellular APP maturation. As intracellular fragment AlcICD, suppresses APBB1-dependent transactivation stimulated by APP C-terminal intracellular fragment (AICD), most probably by competing with AICD for APBB1-binding. Its function is as follows. In complex with APBA2 and C99, a C-terminal APP fragment, abolishes C99 interaction with PSEN1 and thus APP C99 cleavage by gamma-secretase, most probably through stabilization of the direct interaction between APBA2 and APP. The sequence is that of Calsyntenin-1 (Clstn1) from Rattus norvegicus (Rat).